The following is a 104-amino-acid chain: Guanidinium exporter (104 aa).

Residue M1 is a topological domain, cytoplasmic. The helical transmembrane segment at 2 to 19 (AWIILVIAGLLEVIWAIG) threads the bilayer. The Periplasmic portion of the chain corresponds to 20 to 28 (LKYSHGFSR). Residues 29-48 (LTPSIITLVAMAASVFLLAY) form a helical membrane-spanning segment. Residues 49 to 54 (AMKSLP) lie on the Cytoplasmic side of the membrane. Residues 55 to 77 (AGTAYAVWTGIGAVGTAILGIVL) traverse the membrane as a helical segment. Residues 78 to 81 (LGES) are Periplasmic-facing. Residues 82 to 100 (ASLARILSLGLILAGIIGL) form a helical membrane-spanning segment. The Cytoplasmic segment spans residues 101–104 (KLAS).

It belongs to the drug/metabolite transporter (DMT) superfamily. Small multidrug resistance (SMR) (TC 2.A.7.1) family. Gdx/SugE subfamily.

It is found in the cell inner membrane. Its function is as follows. Guanidinium ion exporter. Couples guanidinium export to the proton motive force, exchanging one guanidinium ion for two protons. In Yersinia pestis, this protein is Guanidinium exporter.